The primary structure comprises 226 residues: ATP synthase subunit a (226 aa).

6 helical membrane-spanning segments follow: residues F18 to A38, L79 to F99, S105 to I125, F134 to I154, L179 to F199, and G201 to L221.

Belongs to the ATPase A chain family. In terms of assembly, F-type ATPases have 2 components, CF(1) - the catalytic core - and CF(0) - the membrane proton channel. CF(1) has five subunits: alpha(3), beta(3), gamma(1), delta(1), epsilon(1). CF(0) has three main subunits: a(1), b(2) and c(9-12). The alpha and beta chains form an alternating ring which encloses part of the gamma chain. CF(1) is attached to CF(0) by a central stalk formed by the gamma and epsilon chains, while a peripheral stalk is formed by the delta and b chains.

The protein localises to the cell inner membrane. Functionally, key component of the proton channel; it plays a direct role in the translocation of protons across the membrane. The polypeptide is ATP synthase subunit a (Helicobacter pylori (strain J99 / ATCC 700824) (Campylobacter pylori J99)).